Here is a 339-residue protein sequence, read N- to C-terminus: Serine/threonine-protein kinase SAPK2 (339 aa).

The region spanning 4 to 260 (YEVIKDIGSG…IPEIKNHPWF (257 aa)) is the Protein kinase domain. Residues 10–18 (IGSGNFGVA) and K33 each bind ATP. D123 (proton acceptor) is an active-site residue. The interval 253–339 (EIKNHPWFLK…EDSGDFVCAL (87 aa)) is C-terminal.

It belongs to the protein kinase superfamily. Ser/Thr protein kinase family. Phosphorylated.

The enzyme catalyses L-seryl-[protein] + ATP = O-phospho-L-seryl-[protein] + ADP + H(+). The catalysed reaction is L-threonyl-[protein] + ATP = O-phospho-L-threonyl-[protein] + ADP + H(+). Functionally, may play a role in signal transduction of hyperosmotic response. Can phosphorylate BZIP46 in vitro. The sequence is that of Serine/threonine-protein kinase SAPK2 (SAPK2) from Oryza sativa subsp. indica (Rice).